The chain runs to 327 residues: MAMTTEVKDELSRLVVKSVSARRAEVTSLLRFAGGLHIVGGRVVVEAEVDLGNVARRLRKDIFELYGYNAVVHVLSASGIRKSTRYVLRVANDGEALARQTGLLDNRGRPVRGLPAQVVGGSIADAEAAWRGAFLAHGSLTEPGRSSALEVSCPGPEAALALVGAARRLGVSAKAREVRGADRVVVRDGEAIGALLTRMGAQDTRLIWEERRMRREVRATANRLANFDDANLRRSARAAVAAAARVERALEILGDTVPDHLASAGKLRVEHRQASLEELGRLADPPMTKDAVAGRIRRLLSMADRKAKIEGIPDTESAVTPDLLEDA.

Residues 275–308 constitute a DNA-binding region (H-T-H motif); the sequence is SLEELGRLADPPMTKDAVAGRIRRLLSMADRKAK.

The protein belongs to the WhiA family.

In terms of biological role, involved in cell division and chromosome segregation. The protein is Probable cell division protein WhiA of Mycobacterium avium (strain 104).